Consider the following 42-residue polypeptide: ASDGRNAAADDKASDPIALTVRGGCCSHPVCYTKNPNCGGRR.

The propeptide occupies 1 to 22 (ASDGRNAAADDKASDPIALTVR). 2 disulfides stabilise this stretch: Cys25/Cys31 and Cys26/Cys38. Position 39 is a glycine amide (Gly39).

It belongs to the conotoxin A superfamily. As to expression, expressed by the venom duct.

The protein resides in the secreted. Its function is as follows. Alpha-conotoxins act on postsynaptic membranes, they bind to the nicotinic acetylcholine receptors (nAChR) and thus inhibit them. This toxin potently and selectively inhibits human and rat alpha-6-beta-4/CHRNA6-CHRNB4 nAChR (IC(50)=12 nM on rat nAChR). It exhibits rapid binding and unbinding at this receptor. It also shows activity on rat alpha-6-beta-4/CHRNA6-CHRNB4 (IC(50)=12 nM), human alpha-6/alpha-3-beta-4 (CHRNA6/CHRNA3-CHRNB4) (IC(50)=5.3 nM), rat alpha-6/alpha-3-beta-4 (CHRNA6/CHRNA3-CHRNB4) (IC(50)=18 nM), rat alpha-3-beta-4/CHRNA3-CHRNB4 (IC(50)=320 nM), and rat alpha-6/alpha-3-beta-2-beta-3 (CHRNA6/CHRNA3-CHRNB2-CHRNB3) (IC(50)=4 uM). This chain is Alpha-conotoxin VnIB, found in Conus ventricosus (Mediterranean cone).